The primary structure comprises 384 residues: L-cysteine:1D-myo-inositol 2-amino-2-deoxy-alpha-D-glucopyranoside ligase (384 aa).

Cys-16 lines the Zn(2+) pocket. Residues 16–19 (CGIT), Thr-31, and 54–56 (NVT) contribute to the L-cysteinyl-5'-AMP site. Positions 18–28 (ITPYDATHLGH) match the 'HIGH' region motif. The short motif at 159-164 (ERGGDP) is the 'ERGGDP' region element. Trp-199 contributes to the L-cysteinyl-5'-AMP binding site. Cys-203 is a binding site for Zn(2+). 221–223 (GSD) is an L-cysteinyl-5'-AMP binding site. His-228 lines the Zn(2+) pocket. Residue Ile-255 coordinates L-cysteinyl-5'-AMP. The 'KMSKS' region motif lies at 261-265 (KMSKS).

It belongs to the class-I aminoacyl-tRNA synthetase family. MshC subfamily. As to quaternary structure, monomer. Zn(2+) serves as cofactor.

The enzyme catalyses 1D-myo-inositol 2-amino-2-deoxy-alpha-D-glucopyranoside + L-cysteine + ATP = 1D-myo-inositol 2-(L-cysteinylamino)-2-deoxy-alpha-D-glucopyranoside + AMP + diphosphate + H(+). Catalyzes the ATP-dependent condensation of GlcN-Ins and L-cysteine to form L-Cys-GlcN-Ins. The protein is L-cysteine:1D-myo-inositol 2-amino-2-deoxy-alpha-D-glucopyranoside ligase of Mycobacterium avium (strain 104).